A 137-amino-acid polypeptide reads, in one-letter code: Small ribosomal subunit protein bS6 (137 aa).

A disordered region spans residues 99–137; sequence LSPMKAAESREDRRSGGDDRPRRSADSEERQSASQDEEE. Positions 105-129 are enriched in basic and acidic residues; it reads AESREDRRSGGDDRPRRSADSEERQ.

Belongs to the bacterial ribosomal protein bS6 family.

Its function is as follows. Binds together with bS18 to 16S ribosomal RNA. This Marinobacter nauticus (strain ATCC 700491 / DSM 11845 / VT8) (Marinobacter aquaeolei) protein is Small ribosomal subunit protein bS6.